The chain runs to 194 residues: Methylated-DNA--protein-cysteine methyltransferase (194 aa).

DNA-binding residues include tyrosine 125 and arginine 139. The active-site Nucleophile; methyl group acceptor is the cysteine 156. Residue serine 162 participates in DNA binding.

Belongs to the MGMT family.

It localises to the nucleus. It catalyses the reaction a 6-O-methyl-2'-deoxyguanosine in DNA + L-cysteinyl-[protein] = S-methyl-L-cysteinyl-[protein] + a 2'-deoxyguanosine in DNA. The enzyme catalyses a 4-O-methyl-thymidine in DNA + L-cysteinyl-[protein] = a thymidine in DNA + S-methyl-L-cysteinyl-[protein]. Its function is as follows. Involved in the cellular defense against the biological effects of O6-methylguanine (O6-MeG) and O4-methylthymine (O4-MeT) in DNA. Repairs the methylated nucleobase in DNA by stoichiometrically transferring the methyl group to a cysteine residue in the enzyme. This is a suicide reaction: the enzyme is irreversibly inactivated. The chain is Methylated-DNA--protein-cysteine methyltransferase (MGT1) from Scheffersomyces stipitis (strain ATCC 58785 / CBS 6054 / NBRC 10063 / NRRL Y-11545) (Yeast).